Consider the following 67-residue polypeptide: Putative cytosolic sulfotransferase 2 (67 aa).

31 to 33 contributes to the 3'-phosphoadenylyl sulfate binding site; that stretch reads RDG.

Belongs to the sulfotransferase 1 family.

It is found in the cytoplasm. Functionally, sulfotransferase that utilizes 3'-phospho-5'-adenylyl sulfate (PAPS) as sulfonate donor. The chain is Putative cytosolic sulfotransferase 2 (SOT2) from Arabidopsis thaliana (Mouse-ear cress).